Consider the following 352-residue polypeptide: Nicotinate-nucleotide--dimethylbenzimidazole phosphoribosyltransferase (352 aa).

E318 (proton acceptor) is an active-site residue.

This sequence belongs to the CobT family.

It carries out the reaction 5,6-dimethylbenzimidazole + nicotinate beta-D-ribonucleotide = alpha-ribazole 5'-phosphate + nicotinate + H(+). It participates in nucleoside biosynthesis; alpha-ribazole biosynthesis; alpha-ribazole from 5,6-dimethylbenzimidazole: step 1/2. In terms of biological role, catalyzes the synthesis of alpha-ribazole-5'-phosphate from nicotinate mononucleotide (NAMN) and 5,6-dimethylbenzimidazole (DMB). The sequence is that of Nicotinate-nucleotide--dimethylbenzimidazole phosphoribosyltransferase from Geotalea uraniireducens (strain Rf4) (Geobacter uraniireducens).